Reading from the N-terminus, the 290-residue chain is uncharacterized protein (290 aa).

An ABC transporter domain is found at 2-238 (LKTENLSVGY…EIVNELYDLK (237 aa)). 34–41 (GPNGAGKS) contacts ATP.

Belongs to the ABC transporter superfamily.

This is an uncharacterized protein from Methanocaldococcus jannaschii (strain ATCC 43067 / DSM 2661 / JAL-1 / JCM 10045 / NBRC 100440) (Methanococcus jannaschii).